Consider the following 338-residue polypeptide: Lipoate-protein ligase A (338 aa).

The region spanning 29 to 216 is the BPL/LPL catalytic domain; that stretch reads DPNQRVLFLW…AFFAHYGARV (188 aa). Residues R71, 76–79, and K134 contribute to the ATP site; that span reads GAVF. K134 lines the (R)-lipoate pocket.

The protein belongs to the LplA family. As to quaternary structure, monomer.

It localises to the cytoplasm. It carries out the reaction L-lysyl-[lipoyl-carrier protein] + (R)-lipoate + ATP = N(6)-[(R)-lipoyl]-L-lysyl-[lipoyl-carrier protein] + AMP + diphosphate + H(+). It participates in protein modification; protein lipoylation via exogenous pathway; protein N(6)-(lipoyl)lysine from lipoate: step 1/2. The protein operates within protein modification; protein lipoylation via exogenous pathway; protein N(6)-(lipoyl)lysine from lipoate: step 2/2. Functionally, catalyzes both the ATP-dependent activation of exogenously supplied lipoate to lipoyl-AMP and the transfer of the activated lipoyl onto the lipoyl domains of lipoate-dependent enzymes. This is Lipoate-protein ligase A from Aeromonas salmonicida (strain A449).